The primary structure comprises 653 residues: Transcription factor Ken 1 (653 aa).

Positions 35–103 (TDLLLICDGK…LYSGQVYVRS (69 aa)) constitute a BTB domain. Disordered regions lie at residues 126-215 (NSDG…DRDR), 234-305 (NNHP…SDDA), 429-451 (LSNNNNSSSNNNNNNNRIRPPSA), and 512-534 (ELSARASAAGGGGGGSGGNGSGS). Over residues 145–157 (NRNTEGITGSSVV) the composition is skewed to polar residues. Residues 251-272 (GHHHHHHHHHHHRQLHQIKTRS) are compositionally biased toward basic residues. A compositionally biased stretch (polar residues) spans 286–299 (SDPVNLSIVKQQQD). Over residues 430–444 (SNNNNSSSNNNNNNN) the composition is skewed to low complexity. Positions 520 to 534 (AGGGGGGSGGNGSGS) are enriched in gly residues. C2H2-type zinc fingers lie at residues 555 to 577 (YRCEYCGKTFGMSWNLKTHLRVH), 583 to 606 (FACRLCVAMFKQKAHLLKHLCSVH), and 619 to 641 (YTCCFCSLVFETLQELVRHLSGH).

It is found in the nucleus. Functionally, transcription factor required for terminalia development. Negative regulator of the JAK/STAT pathway: represses JAK/STAT-dependent expression of ventral veins lacking (vvl) in the posterior spiracles. The protein is Transcription factor Ken 1 of Culex quinquefasciatus (Southern house mosquito).